The chain runs to 133 residues: Small ribosomal subunit protein uS9 (133 aa).

A disordered region spans residues 97-133 (MKQELKSQGFLTRDPRKKERKKYGRKKARKSFQFSKR). Over residues 114-133 (KERKKYGRKKARKSFQFSKR) the composition is skewed to basic residues.

Belongs to the universal ribosomal protein uS9 family.

The chain is Small ribosomal subunit protein uS9 (rpsI) from Chlamydia muridarum (strain MoPn / Nigg).